A 1129-amino-acid polypeptide reads, in one-letter code: Kinesin-like protein KIP1 (1129 aa).

The disordered stretch occupies residues 1-49; it reads MLEQAEKLMKRNSSGAMSAPQSKPLARSRSSTMPTTTQKRVRSSQQSEG. Composition is skewed to polar residues over residues 11–21 and 28–48; these read RNSSGAMSAPQ and SRSSTMPTTTQKRVRSSQQSE. The 364-residue stretch at 54–417 folds into the Kinesin motor domain; the sequence is NIKVYVRCRS…LEYATRAKSI (364 aa). 139 to 146 contacts ATP; the sequence is GQTGTGKT. Coiled coils occupy residues 422 to 513, 681 to 765, and 919 to 948; these read QVNQ…ELDV, LEKE…QKIV, and DDQRRELRSVINNTNNHADRLRSEIGTLVN.

This sequence belongs to the TRAFAC class myosin-kinesin ATPase superfamily. Kinesin family. BimC subfamily.

It localises to the cytoplasm. Its subcellular location is the cytoskeleton. The protein resides in the spindle. In terms of biological role, required for assembly of the mitotic spindle. Interacts with spindle microtubules to produce an outwardly directed force acting upon the poles. Following spindle assembly, CIN8 and KIP1 apparently act to oppose a force that draws separated poles back together. This force seems to be mediate by KAR3. In Eremothecium gossypii (strain ATCC 10895 / CBS 109.51 / FGSC 9923 / NRRL Y-1056) (Yeast), this protein is Kinesin-like protein KIP1 (KIP1).